The primary structure comprises 504 residues: ATP synthase subunit beta (504 aa).

181-188 (GGAGVGKT) lines the ATP pocket.

Belongs to the ATPase alpha/beta chains family. As to quaternary structure, F-type ATPases have 2 components, CF(1) - the catalytic core - and CF(0) - the membrane proton channel. CF(1) has five subunits: alpha(3), beta(3), gamma(1), delta(1), epsilon(1). CF(0) has three main subunits: a(1), b(2) and c(9-12). The alpha and beta chains form an alternating ring which encloses part of the gamma chain. CF(1) is attached to CF(0) by a central stalk formed by the gamma and epsilon chains, while a peripheral stalk is formed by the delta and b chains.

It is found in the cell inner membrane. It catalyses the reaction ATP + H2O + 4 H(+)(in) = ADP + phosphate + 5 H(+)(out). Functionally, produces ATP from ADP in the presence of a proton gradient across the membrane. The catalytic sites are hosted primarily by the beta subunits. The protein is ATP synthase subunit beta of Ehrlichia ruminantium (strain Welgevonden).